A 501-amino-acid polypeptide reads, in one-letter code: Cytochrome P450 monooxygenase 76AD131 (501 aa).

Residues methionine 1 to leucine 21 form a helical membrane-spanning segment. Asparagine 115 and asparagine 264 each carry an N-linked (GlcNAc...) asparagine glycan. Cysteine 444 is a heme binding site.

The protein belongs to the cytochrome P450 family. The cofactor is heme. Highly expressed in aerial parts, in both skin and flesh tissues.

It localises to the membrane. It carries out the reaction tyramine + reduced [NADPH--hemoprotein reductase] + O2 = dopamine + oxidized [NADPH--hemoprotein reductase] + H2O + H(+). The catalysed reaction is 3-methoxytyramine + reduced [NADPH--hemoprotein reductase] + O2 = 3,4-dihydroxy-5-methoxyphenethylamine + oxidized [NADPH--hemoprotein reductase] + H2O + H(+). Its pathway is aromatic compound metabolism. The protein operates within alkaloid biosynthesis. Functionally, cytochrome P450 monooxygenase participating in the biosynthesis of natural products derived from phenylethylamine, including mescaline, a natural hallucinogen potentially used in psychotherapeutic treatments. Catalyzes the hydroxylation of tyramine to dopamine and of 3-methoxytyramine to 3,4-dihydroxy-5-methoxyphenethylamine. The chain is Cytochrome P450 monooxygenase 76AD131 from Lophophora williamsii (Peyote).